Here is a 588-residue protein sequence, read N- to C-terminus: Aspartate--tRNA ligase (588 aa).

Glutamate 172 is a binding site for L-aspartate. An aspartate region spans residues 196-199; sequence QLFK. L-aspartate is bound at residue arginine 218. ATP contacts are provided by residues 218–220 and glutamine 227; that span reads RDE. Histidine 449 is an L-aspartate binding site. Glutamate 483 is an ATP binding site. Arginine 490 lines the L-aspartate pocket. ATP is bound at residue 535 to 538; the sequence is GLDR.

Belongs to the class-II aminoacyl-tRNA synthetase family. Type 1 subfamily. In terms of assembly, homodimer.

The protein resides in the cytoplasm. It carries out the reaction tRNA(Asp) + L-aspartate + ATP = L-aspartyl-tRNA(Asp) + AMP + diphosphate. Functionally, catalyzes the attachment of L-aspartate to tRNA(Asp) in a two-step reaction: L-aspartate is first activated by ATP to form Asp-AMP and then transferred to the acceptor end of tRNA(Asp). This is Aspartate--tRNA ligase from Pasteurella multocida (strain Pm70).